Here is a 261-residue protein sequence, read N- to C-terminus: Lysosome-associated membrane glycoprotein 5 (261 aa).

Residues M1–A29 form the signal peptide. The Extracellular portion of the chain corresponds to E30–E234. N-linked (GlcNAc...) asparagine glycosylation is found at N35, N53, and N126. The helical transmembrane segment at T235 to Y255 threads the bilayer. Over H256–K261 the chain is Cytoplasmic.

The protein belongs to the LAMP family. Post-translationally, glycosylated.

Its subcellular location is the cytoplasmic vesicle membrane. It localises to the cell membrane. The protein localises to the cell projection. The protein resides in the dendrite. It is found in the cytoplasmic vesicle. Its subcellular location is the secretory vesicle. It localises to the synaptic vesicle membrane. The protein localises to the growth cone membrane. The protein resides in the early endosome membrane. It is found in the recycling endosome. Its subcellular location is the endoplasmic reticulum-Golgi intermediate compartment membrane. It localises to the endosome membrane. Its function is as follows. Plays a role in short-term synaptic plasticity in a subset of GABAergic neurons in the brain. This Pongo abelii (Sumatran orangutan) protein is Lysosome-associated membrane glycoprotein 5 (LAMP5).